A 94-amino-acid polypeptide reads, in one-letter code: Large ribosomal subunit protein eL43A (94 aa).

A C4-type zinc finger spans residues 39-62 (CPFCGRNTVKRTAAGIWCCNGKGC).

This sequence belongs to the eukaryotic ribosomal protein eL43 family. Component of the large ribosomal subunit (LSU). Mature yeast ribosomes consist of a small (40S) and a large (60S) subunit. The 40S small subunit contains 1 molecule of ribosomal RNA (18S rRNA) and at least 33 different proteins. The large 60S subunit contains 3 rRNA molecules (25S, 5.8S and 5S rRNA) and at least 46 different proteins.

The protein localises to the cytoplasm. In terms of biological role, component of the ribosome, a large ribonucleoprotein complex responsible for the synthesis of proteins in the cell. The small ribosomal subunit (SSU) binds messenger RNAs (mRNAs) and translates the encoded message by selecting cognate aminoacyl-transfer RNA (tRNA) molecules. The large subunit (LSU) contains the ribosomal catalytic site termed the peptidyl transferase center (PTC), which catalyzes the formation of peptide bonds, thereby polymerizing the amino acids delivered by tRNAs into a polypeptide chain. The nascent polypeptides leave the ribosome through a tunnel in the LSU and interact with protein factors that function in enzymatic processing, targeting, and the membrane insertion of nascent chains at the exit of the ribosomal tunnel. In Schizosaccharomyces pombe (strain 972 / ATCC 24843) (Fission yeast), this protein is Large ribosomal subunit protein eL43A (rpl4301).